We begin with the raw amino-acid sequence, 544 residues long: Chaperonin GroEL (544 aa).

ATP-binding positions include 29 to 32 (TLGP), 86 to 90 (DGTTT), glycine 413, 478 to 480 (NAA), and aspartate 494.

The protein belongs to the chaperonin (HSP60) family. As to quaternary structure, forms a cylinder of 14 subunits composed of two heptameric rings stacked back-to-back. Interacts with the co-chaperonin GroES.

It localises to the cytoplasm. The enzyme catalyses ATP + H2O + a folded polypeptide = ADP + phosphate + an unfolded polypeptide.. Functionally, together with its co-chaperonin GroES, plays an essential role in assisting protein folding. The GroEL-GroES system forms a nano-cage that allows encapsulation of the non-native substrate proteins and provides a physical environment optimized to promote and accelerate protein folding. This chain is Chaperonin GroEL, found in Lysinibacillus sphaericus (strain C3-41).